Consider the following 529-residue polypeptide: Beta-glucosidase 11 (529 aa).

The signal sequence occupies residues Met-1–Ala-25. A beta-D-glucoside is bound by residues Gln-54, His-157, and Asn-202 to Glu-203. The active-site Proton donor is the Glu-203. Cys-222 and Cys-230 are oxidised to a cystine. Residue Tyr-346 participates in a beta-D-glucoside binding. Asn-361 carries N-linked (GlcNAc...) asparagine glycosylation. Residue Glu-417 coordinates a beta-D-glucoside. Glu-417 acts as the Nucleophile in catalysis. Asn-425 is a glycosylation site (N-linked (GlcNAc...) asparagine). Residues Trp-466, Glu-473–Trp-474, and Phe-482 contribute to the a beta-D-glucoside site.

This sequence belongs to the glycosyl hydrolase 1 family.

The enzyme catalyses Hydrolysis of terminal, non-reducing beta-D-glucosyl residues with release of beta-D-glucose.. The polypeptide is Beta-glucosidase 11 (BGLU11) (Oryza sativa subsp. japonica (Rice)).